Consider the following 110-residue polypeptide: Hydrogenase maturation factor HypA (110 aa).

H2 contacts Ni(2+). Zn(2+) contacts are provided by C70, C73, C86, and C89.

It belongs to the HypA/HybF family.

Functionally, involved in the maturation of [NiFe] hydrogenases. Required for nickel insertion into the metal center of the hydrogenase. This chain is Hydrogenase maturation factor HypA, found in Geobacter metallireducens (strain ATCC 53774 / DSM 7210 / GS-15).